The following is a 320-amino-acid chain: NAC domain-containing protein 20 (320 aa).

In terms of domain architecture, NAC spans 14–170; that stretch reads LPPGFRFHPT…DWAVCRIFHK (157 aa). Residues 114-176 mediate DNA binding; it reads IGMKKTLVFY…IFHKSSGIKK (63 aa).

As to quaternary structure, forms homodimers. Forms heterodimers with NAC26. As to expression, expressed in developing seeds. Expressed in developing endosperm.

The protein resides in the nucleus. It is found in the endoplasmic reticulum. Transcription factor that acts redundantly with NAC26 to regulate the expression of genes involved in the biosynthesis of starch and storage proteins in grain. Directly binds to the promoters of starch synthase 1 (SS1), pullulanase (PUL), glutelin A1 (GLUA1), glutelins B4 and B5 (GLUB4 and GLUB5), alpha-globulin and 16 kDa prolamin, and activates their expression. This Oryza sativa subsp. japonica (Rice) protein is NAC domain-containing protein 20.